The sequence spans 258 residues: Homeobox-leucine zipper protein ATHB-7 (258 aa).

A DNA-binding region (homeobox) is located at residues 29–88 (NKNNQRRFSDEQIKSLEMMFESETRLEPRKKVQLARELGLQPRQVAIWFQNKRARWKSKQ). Residues 89 to 124 (LETEYNILRQNYDNLASQFESLKKEKQALVSELQRL) are leucine-zipper. A disordered region spans residues 149 to 183 (SSTHHESENEENRRRKPEEVRPEMEMKDDKGHHGV). Over residues 151 to 183 (THHESENEENRRRKPEEVRPEMEMKDDKGHHGV) the composition is skewed to basic and acidic residues.

Belongs to the HD-ZIP homeobox family. Class I subfamily. In terms of assembly, interacts with TBP2 and TFIIB1. Widely expressed.

It localises to the nucleus. Functionally, probable transcription activator that may act as growth regulators in response to water deficit. The polypeptide is Homeobox-leucine zipper protein ATHB-7 (ATHB-7) (Arabidopsis thaliana (Mouse-ear cress)).